Reading from the N-terminus, the 252-residue chain is Electron transfer flavoprotein subunit beta (252 aa).

It belongs to the ETF beta-subunit/FixA family. In terms of assembly, heterodimer of an alpha and a beta subunit. AMP serves as cofactor.

It is found in the cytoplasm. It functions in the pathway lipid metabolism; butanoate metabolism. Part of an electron transfer flavoprotein involved in syntrophic growth of S.wolfei with butyrate. Probably receives electrons from butyryl-CoA dehydrogenases, and transfers them to the membrane-bound quinone oxidoreductase Swol_0698. This Syntrophomonas wolfei subsp. wolfei (strain DSM 2245B / Goettingen) protein is Electron transfer flavoprotein subunit beta.